We begin with the raw amino-acid sequence, 726 residues long: Probable dipeptidyl-peptidase 5 (726 aa).

The signal sequence occupies residues 1 to 19 (MAAAKWLIASLAFASSGLA). N-linked (GlcNAc...) asparagine glycosylation is found at Asn96 and Asn252. Positions 269–291 (AEPINKRNGPRTPQGIEGASSSP) are disordered. The active-site Charge relay system is Ser558. Asn605 carries an N-linked (GlcNAc...) asparagine glycan. Residues Asp641 and His673 each act as charge relay system in the active site. Residue Asn699 is glycosylated (N-linked (GlcNAc...) asparagine).

It belongs to the peptidase S9C family.

It localises to the secreted. In terms of biological role, extracellular dipeptidyl-peptidase which removes N-terminal dipeptides sequentially from polypeptides having unsubstituted N-termini. Contributes to pathogenicity. The polypeptide is Probable dipeptidyl-peptidase 5 (DPP5) (Trichophyton verrucosum (strain HKI 0517)).